The sequence spans 497 residues: Indoleacetaldoxime dehydratase (497 aa).

The helical transmembrane segment at 2–20 (EMILSISLCLTTLITLLLL) threads the bilayer. A heme-binding site is contributed by Cys439.

Belongs to the cytochrome P450 family.

The protein resides in the membrane. The enzyme catalyses (E)-(indol-3-yl)acetaldehyde oxime = (indol-3-yl)acetonitrile + H2O. Its function is as follows. Involved in the biosynthesis of the indole-derived phytoalexin camalexin. Catalyzes the conversion of indole-3-acetaldoxime to indole-3-acetonitrile. Required for resistance to A.brassicicola and B.cinerea. The polypeptide is Indoleacetaldoxime dehydratase (CYP71A13) (Arabidopsis thaliana (Mouse-ear cress)).